A 638-amino-acid chain; its full sequence is Phosphomethylpyrimidine synthase (638 aa).

Substrate contacts are provided by residues Asn243, Met272, Tyr301, His337, Ser357 to Gly359, Asp398 to Arg401, and Glu437. His441 provides a ligand contact to Zn(2+). Position 464 (Tyr464) interacts with substrate. Zn(2+) is bound at residue His505. [4Fe-4S] cluster contacts are provided by Cys585, Cys588, and Cys593.

It belongs to the ThiC family. In terms of assembly, homodimer. [4Fe-4S] cluster is required as a cofactor.

It carries out the reaction 5-amino-1-(5-phospho-beta-D-ribosyl)imidazole + S-adenosyl-L-methionine = 4-amino-2-methyl-5-(phosphooxymethyl)pyrimidine + CO + 5'-deoxyadenosine + formate + L-methionine + 3 H(+). It participates in cofactor biosynthesis; thiamine diphosphate biosynthesis. Functionally, catalyzes the synthesis of the hydroxymethylpyrimidine phosphate (HMP-P) moiety of thiamine from aminoimidazole ribotide (AIR) in a radical S-adenosyl-L-methionine (SAM)-dependent reaction. This is Phosphomethylpyrimidine synthase from Dechloromonas aromatica (strain RCB).